The following is a 62-amino-acid chain: Photosystem II reaction center protein Z (62 aa).

2 helical membrane passes run 8 to 28 (AVFALISTSLILLIGVPVVFA) and 41 to 61 (FSGTSLWIGLVFLVGILNSLI).

It belongs to the PsbZ family. PSII is composed of 1 copy each of membrane proteins PsbA, PsbB, PsbC, PsbD, PsbE, PsbF, PsbH, PsbI, PsbJ, PsbK, PsbL, PsbM, PsbT, PsbY, PsbZ, Psb30/Ycf12, at least 3 peripheral proteins of the oxygen-evolving complex and a large number of cofactors. It forms dimeric complexes.

It localises to the plastid. The protein localises to the chloroplast thylakoid membrane. Its function is as follows. May control the interaction of photosystem II (PSII) cores with the light-harvesting antenna, regulates electron flow through the 2 photosystem reaction centers. PSII is a light-driven water plastoquinone oxidoreductase, using light energy to abstract electrons from H(2)O, generating a proton gradient subsequently used for ATP formation. This Pelargonium hortorum (Common geranium) protein is Photosystem II reaction center protein Z.